A 196-amino-acid chain; its full sequence is Large ribosomal subunit protein uL11m (196 aa).

This sequence belongs to the universal ribosomal protein uL11 family. In terms of assembly, component of the mitochondrial ribosome large subunit (39S) which comprises a 16S rRNA and about 50 distinct proteins.

The protein resides in the mitochondrion. This chain is Large ribosomal subunit protein uL11m (mRpL11), found in Drosophila melanogaster (Fruit fly).